Reading from the N-terminus, the 88-residue chain is Class II hydrophobin 1 (88 aa).

The N-terminal stretch at 1 to 15 (MKFFIATIFATGALA) is a signal peptide. 4 disulfide bridges follow: Cys19-Cys69, Cys29-Cys59, Cys30-Cys42, and Cys70-Cys81.

It belongs to the cerato-ulmin hydrophobin family. In terms of assembly, homodimer. Homodimers further self-assemble to form highly ordered films at water-air interfaces through intermolecular interactions.

It localises to the secreted. It is found in the cell wall. Aerial growth, conidiation, and dispersal of filamentous fungi in the environment rely upon a capability of their secreting small amphipathic proteins called hydrophobins (HPBs) with low sequence identity. Class I can self-assemble into an outermost layer of rodlet bundles on aerial cell surfaces, conferring cellular hydrophobicity that supports fungal growth, development and dispersal; whereas Class II form highly ordered films at water-air interfaces through intermolecular interactions but contribute nothing to the rodlet structure. This is Class II hydrophobin 1 from Trichoderma asperellum (strain ATCC 204424 / CBS 433.97 / NBRC 101777).